A 224-amino-acid chain; its full sequence is Thymidylate kinase (224 aa).

Residue 13-20 (GGEGAGKS) coordinates ATP.

Belongs to the thymidylate kinase family.

The enzyme catalyses dTMP + ATP = dTDP + ADP. Phosphorylation of dTMP to form dTDP in both de novo and salvage pathways of dTTP synthesis. This is Thymidylate kinase from Agrobacterium fabrum (strain C58 / ATCC 33970) (Agrobacterium tumefaciens (strain C58)).